The following is a 421-amino-acid chain: Tryptophan synthase beta chain (421 aa).

K112 is subject to N6-(pyridoxal phosphate)lysine.

The protein belongs to the TrpB family. Tetramer of two alpha and two beta chains. It depends on pyridoxal 5'-phosphate as a cofactor.

The catalysed reaction is (1S,2R)-1-C-(indol-3-yl)glycerol 3-phosphate + L-serine = D-glyceraldehyde 3-phosphate + L-tryptophan + H2O. It participates in amino-acid biosynthesis; L-tryptophan biosynthesis; L-tryptophan from chorismate: step 5/5. The beta subunit is responsible for the synthesis of L-tryptophan from indole and L-serine. This is Tryptophan synthase beta chain (trpB) from Mycobacterium bovis (strain ATCC BAA-935 / AF2122/97).